Here is a 368-residue protein sequence, read N- to C-terminus: Glutamate 5-kinase (368 aa).

Lysine 12 is an ATP binding site. The substrate site is built by serine 52, aspartate 139, and asparagine 151. Residues 171-172 and 213-219 contribute to the ATP site; these read SD and TGGMKTK. A PUA domain is found at 277-354; sequence KGALIIDDGA…KEIEKLLGYI (78 aa).

This sequence belongs to the glutamate 5-kinase family.

The protein localises to the cytoplasm. It carries out the reaction L-glutamate + ATP = L-glutamyl 5-phosphate + ADP. It functions in the pathway amino-acid biosynthesis; L-proline biosynthesis; L-glutamate 5-semialdehyde from L-glutamate: step 1/2. Its function is as follows. Catalyzes the transfer of a phosphate group to glutamate to form L-glutamate 5-phosphate. This Pelagibacter ubique (strain HTCC1062) protein is Glutamate 5-kinase.